We begin with the raw amino-acid sequence, 237 residues long: MTPQEFYQLLAQQGIELTDRQKDQFERYFELLVEWNEKINLTAITEKNEVYLKHFYDSIAPVLQGLIDNQELKLLDIGAGAGFPSLPMKIICPQLDVTIIDSLNKRINFLKLLAEELGLDKVHFYHGRAEDFAQDKAFRAQFDLVTARAVARMQILSELTIPYLKVGGKLLALKASNAPEELEEAKNALNLLFSKVQDNLSYALPNGDPRFITVVEKKKETPNKYPRKAGMPNKRPL.

S-adenosyl-L-methionine-binding positions include glycine 78, phenylalanine 83, 129 to 130 (AE), and arginine 148. Residues 218 to 237 (KKETPNKYPRKAGMPNKRPL) are disordered.

The protein belongs to the methyltransferase superfamily. RNA methyltransferase RsmG family.

The protein localises to the cytoplasm. In terms of biological role, specifically methylates the N7 position of a guanine in 16S rRNA. In Streptococcus sanguinis (strain SK36), this protein is Ribosomal RNA small subunit methyltransferase G.